A 71-amino-acid chain; its full sequence is MLDKKVLEILVCPLTGGKLSYDTERAELISHEAGLAYPVRDGIPIMLVDEARKLQPEEPKEGSELQSSDNQ.

Residues 52 to 63 (RKLQPEEPKEGS) show a composition bias toward basic and acidic residues. The segment at 52–71 (RKLQPEEPKEGSELQSSDNQ) is disordered.

The protein belongs to the UPF0434 family.

In Anaplasma phagocytophilum (strain HZ), this protein is UPF0434 protein APH_0052.